We begin with the raw amino-acid sequence, 322 residues long: Rhomboid-like protein 16, chloroplastic (322 aa).

A chloroplast-targeting transit peptide spans 1 to 52; that stretch reads MHAIFCRRVAVGCSSPQLTKLVTKQASQSRHSLSHLLPFDLSSRFVPPYVVS. A run of 6 helical transmembrane segments spans residues 110 to 130, 166 to 186, 201 to 221, 238 to 258, 265 to 285, and 295 to 315; these read WINGANGVVFGLVIANAAVFT, FSHVGATHIILNMMGLCYFGA, YFAGALGGSVFFLSSHALSVI, IGKLGANGPVYAITLLDMLLY, FGLMLRVPVFAGIYSLGLNII, and TLTSLDQLGGVVVAVIAWARI.

The protein belongs to the peptidase S54 family.

Its subcellular location is the plastid. It localises to the chloroplast membrane. Rhomboid-type serine protease that catalyzes intramembrane proteolysis. May cleave the plastid translocon component Tic40. The sequence is that of Rhomboid-like protein 16, chloroplastic from Arabidopsis thaliana (Mouse-ear cress).